A 147-amino-acid polypeptide reads, in one-letter code: Histidine-containing phosphotransfer protein 1 (147 aa).

The region spanning Ala-38–Met-133 is the HPt domain. His-79 is subject to Phosphohistidine.

Two-component system major event consists of a His-to-Asp phosphorelay between a sensor histidine kinase (HK) and a response regulator (RR). In plants, the His-to-Asp phosphorelay involves an additional intermediate named Histidine-containing phosphotransfer protein (HPt). This multistep phosphorelay consists of a His-Asp-His-Asp sequential transfer of a phosphate group between first a His and an Asp of the HK protein, followed by the transfer to a conserved His of the HPt protein and finally the transfer to an Asp in the receiver domain of the RR protein. As to expression, widely expressed.

It localises to the cytoplasm. The protein resides in the cytosol. It is found in the nucleus. In terms of biological role, functions as a two-component phosphorelay mediators between cytokinin sensor histidine kinases and response regulators (B-type ARRs). Plays an important role in propagating cytokinin signal transduction through the multistep His-to-Asp phosphorelay. Functions as a positive regulator of the cytokinin signaling pathway. May play a regulatory role in salt and drought tolerance during plant development. The chain is Histidine-containing phosphotransfer protein 1 from Oryza sativa subsp. japonica (Rice).